A 504-amino-acid chain; its full sequence is MPSSSSARSSQSLRSSAAAAVSTSSGAADQPSVPIEILVEHLLAAKRSLSSMTLVLEANDLTTQARSVHEDSVVLAARTAFLRAGIAQQIHTLERIRRGLARTYDVGRRDFEQLIKVLDDAGERLTRTMNVLHNTIVDPVFRPAGEEPRSLMFFVDEGNVDRLTKSLKESIAELKAAETSYDGDLLRFDNDIRSVKKHLLAAPGLPSPSNSVFSRPMADLVRTLTNHSHAMAENLSSLTRHFDLCVTAVRASEGGAALALRKAAEDGPSTISISGVIRGDGTDADDQDIKTMSARERDEMLRVVMQDATEVGEVVRDINSGLEEMQALGALVEQQAAHVRTAHECTLDAFRRLEEVEARLGSYVAAEREYVDRCEVEKDAIHERLAQAEDLVVFYEGYAGAYDGLVLEYERRRNVEDKIRALWRKAAAAVEKLEEQDAAARDSMRKDVGDYIPGDLWVGMDDPVRKWKVVAVDEGEGGSGEIEGSSVRLKKGTVEAARERVHGR.

It belongs to the ATG17 family.

The protein resides in the cytoplasm. The protein localises to the preautophagosomal structure membrane. Its function is as follows. Autophagy-specific protein that functions in response to autophagy-inducing signals as a scaffold to recruit other ATG proteins to organize pre-autophagosomal structure (PAS) formation. Modulates the timing and magnitude of the autophagy response, such as the size of the sequestering vesicles. Plays particularly a role in pexophagy and nucleophagy. This Pyricularia oryzae (strain 70-15 / ATCC MYA-4617 / FGSC 8958) (Rice blast fungus) protein is Autophagy-related protein 17 (ATG17).